A 1537-amino-acid polypeptide reads, in one-letter code: Dual oxidase (1537 aa).

The disordered stretch occupies residues 1 to 29 (MSVPSAPHQRAESKNRVPRPGQKNRKLPK). Residues 1 to 626 (MSVPSAPHQR…EGYDYFSGSE (626 aa)) lie on the Extracellular side of the membrane. Residues 63-628 (MYSQTEKQRY…YDYFSGSELM (566 aa)) are peroxidase-like; mediates peroxidase activity. 4 N-linked (GlcNAc...) asparagine glycosylation sites follow: Asn133, Asn233, Asn577, and Asn606. Residues 627–647 (LMFIYVCVFLGFVPILCAGAG) form a helical membrane-spanning segment. The Cytoplasmic segment spans residues 648–1029 (YCVVKLQNSK…ITFLEENRQN (382 aa)). Ser826 is modified (phosphoserine). 3 consecutive EF-hand domains span residues 855 to 890 (PNDM…FSRG), 891 to 926 (KTDD…LVEI), and 936 to 971 (QVTE…YKGD). Residues Asp868, Asp870, Asp872, Arg874, Glu879, Asp904, Asp906, Asn908, and Glu915 each contribute to the Ca(2+) site. Residues 1030 to 1050 (IFYLFLFYVVTIVLFVERFIH) form a helical membrane-spanning segment. The Extracellular portion of the chain corresponds to 1051–1065 (YSFMAEHTDLRHIMG). Residues 1066-1086 (VGIAITRGSAASLSFCYSLLL) form a helical membrane-spanning segment. In terms of domain architecture, Ferric oxidoreductase spans 1078–1218 (LSFCYSLLLL…TLYIGLYLLS (141 aa)). Over 1087 to 1116 (LTMSRNLITKLKEFPIQQYIPLDSHIQFHK) the chain is Cytoplasmic. The residue at position 1105 (Tyr1105) is a Phosphotyrosine. Residues 1117–1137 (IAACTALFFSVLHTVGHIVNF) form a helical membrane-spanning segment. Residues 1138–1171 (YHVSTQSHENLRCLTREVHFASDYKPDITFWLFQ) lie on the Extracellular side of the membrane. Residues 1172–1192 (TVTGTTGVMLFIIMCIIFVFA) form a helical membrane-spanning segment. Residues 1193–1202 (HPTIRKKAYN) lie on the Cytoplasmic side of the membrane. A helical membrane pass occupies residues 1203-1223 (FFWNMHTLYIGLYLLSLIHGL). The Extracellular portion of the chain corresponds to 1224-1230 (ARLTGPP). A helical transmembrane segment spans residues 1231-1251 (RFWMFFLGPGIVYTLDKIVSL). The Cytoplasmic portion of the chain corresponds to 1252-1537 (RTKYMALDVI…YFIHHFENFG (286 aa)). The region spanning 1253–1358 (TKYMALDVID…EGPFGGGNQD (106 aa)) is the FAD-binding FR-type domain.

In the N-terminal section; belongs to the peroxidase family.

It localises to the membrane. The enzyme catalyses NADH + O2 + H(+) = H2O2 + NAD(+). It catalyses the reaction NADPH + O2 + H(+) = H2O2 + NADP(+). Its activity is regulated as follows. Peroxidase activity is inhibited by aminotriazole and azide. Its function is as follows. Plays a role in innate immunity limiting microbial proliferation in the gut. Acts downstream of a hh-signaling pathway to induce the production of reactive oxygen species (ROS) in response to intestinal bacterial infection. May generate antimicrobial oxidative burst through its peroxidase-like domain. This Drosophila melanogaster (Fruit fly) protein is Dual oxidase (Duox).